Consider the following 381-residue polypeptide: Homoserine O-succinyltransferase (381 aa).

Residues 45 to 360 (NAVLVCHALN…PHGHDAFLLD (316 aa)) enclose the AB hydrolase-1 domain. The active-site Nucleophile is the Ser151. A substrate-binding site is contributed by Arg221. Residues Asp321 and His354 contribute to the active site. Asp355 provides a ligand contact to substrate.

The protein belongs to the AB hydrolase superfamily. MetX family. Homodimer.

It localises to the cytoplasm. It catalyses the reaction L-homoserine + succinyl-CoA = O-succinyl-L-homoserine + CoA. It participates in amino-acid biosynthesis; L-methionine biosynthesis via de novo pathway; O-succinyl-L-homoserine from L-homoserine: step 1/1. Transfers a succinyl group from succinyl-CoA to L-homoserine, forming succinyl-L-homoserine. This chain is Homoserine O-succinyltransferase, found in Burkholderia cenocepacia (strain HI2424).